Reading from the N-terminus, the 85-residue chain is Sodium channel neurotoxin MeuNaTxalpha-2 (85 aa).

An N-terminal signal peptide occupies residues 1 to 19 (MNYLVMISLALLLMTGVES). Positions 21–83 (RDAYIANDRN…VPIRIPGECR (63 aa)) constitute an LCN-type CS-alpha/beta domain. 4 cysteine pairs are disulfide-bonded: Cys-31-Cys-82, Cys-35-Cys-55, Cys-41-Cys-65, and Cys-45-Cys-67. Arg-83 is modified (arginine amide).

The protein belongs to the long (4 C-C) scorpion toxin superfamily. Sodium channel inhibitor family. Alpha subfamily. As to expression, expressed by the venom gland.

The protein localises to the secreted. Its function is as follows. Alpha toxins bind voltage-independently at site-3 of sodium channels (Nav) and inhibit the inactivation of the activated channels, thereby blocking neuronal transmission. This toxin inhibits inactivation of Nav1.4/SCN4A (EC(50)=2.23 uM) and drosophila DmNav1 (EC(50)=220 nM). The toxin (1 uM) does not significantly shift the midpoint of activation at the two channels, but induces a significant depolarizing shift in the V(1/2) of inactivation of the channels. In addition, the toxin accelerates the recovery from fast inactivation in Nav1.4/SCN4A and DmNav1. It also shows antimicrobial activity. The protein is Sodium channel neurotoxin MeuNaTxalpha-2 of Mesobuthus eupeus (Lesser Asian scorpion).